The primary structure comprises 296 residues: Cobalamin trafficking protein CblD (296 aa).

Residues 1–38 (MANVLCNRARLVSYLPGFCSLVKRVVNPKAFSTAGSSG) constitute a mitochondrion transit peptide. Lysine 203 carries the N6-acetyllysine modification.

As to quaternary structure, heterodimer with MMACHC. Forms a multiprotein complex with MMACHC, MTR and MTRR. As to expression, widely expressed at high levels.

Its subcellular location is the cytoplasm. It is found in the mitochondrion. In terms of biological role, involved in cobalamin metabolism and trafficking. Plays a role in regulating the biosynthesis and the proportion of two coenzymes, methylcob(III)alamin (MeCbl) and 5'-deoxyadenosylcobalamin (AdoCbl). Promotes oxidation of cob(II)alamin bound to MMACHC. The processing of cobalamin in the cytosol occurs in a multiprotein complex composed of at least MMACHC, MMADHC, MTRR (methionine synthase reductase) and MTR (methionine synthase) which may contribute to shuttle safely and efficiently cobalamin towards MTR in order to produce methionine. This is Cobalamin trafficking protein CblD from Homo sapiens (Human).